The sequence spans 431 residues: Gamma-glutamyl phosphate reductase (431 aa).

The protein belongs to the gamma-glutamyl phosphate reductase family.

The protein localises to the cytoplasm. The enzyme catalyses L-glutamate 5-semialdehyde + phosphate + NADP(+) = L-glutamyl 5-phosphate + NADPH + H(+). It functions in the pathway amino-acid biosynthesis; L-proline biosynthesis; L-glutamate 5-semialdehyde from L-glutamate: step 2/2. Functionally, catalyzes the NADPH-dependent reduction of L-glutamate 5-phosphate into L-glutamate 5-semialdehyde and phosphate. The product spontaneously undergoes cyclization to form 1-pyrroline-5-carboxylate. In Beijerinckia indica subsp. indica (strain ATCC 9039 / DSM 1715 / NCIMB 8712), this protein is Gamma-glutamyl phosphate reductase.